The chain runs to 210 residues: Probable GTP-binding protein EngB (210 aa).

The EngB-type G domain occupies 30-204 (QGYEVAFAGR…YRVLADWMEL (175 aa)). GTP contacts are provided by residues 38–45 (GRSNAGKS), 64–68 (GRTQL), 82–85 (DLPG), 149–152 (TKAD), and 182–185 (LFSA). Residues Ser45 and Thr66 each contribute to the Mg(2+) site.

It belongs to the TRAFAC class TrmE-Era-EngA-EngB-Septin-like GTPase superfamily. EngB GTPase family. It depends on Mg(2+) as a cofactor.

In terms of biological role, necessary for normal cell division and for the maintenance of normal septation. The chain is Probable GTP-binding protein EngB from Pseudomonas putida (strain ATCC 700007 / DSM 6899 / JCM 31910 / BCRC 17059 / LMG 24140 / F1).